Reading from the N-terminus, the 224-residue chain is Virulence transcriptional regulatory protein PhoP (224 aa).

One can recognise a Response regulatory domain in the interval 3 to 117 (RVLVVEDNAL…EVMARMQALM (115 aa)). A 4-aspartylphosphate modification is found at Asp-52. The ompR/PhoB-type DNA-binding region spans 125–223 (SQVINISPFQ…VRGQGYLFEL (99 aa)).

Post-translationally, phosphorylated by PhoQ.

The protein resides in the cytoplasm. In terms of biological role, member of the two-component regulatory system PhoQ/PhoP which regulates the expression of genes involved in virulence and resistance to host defense antimicrobial peptides. Promotes intramacrophage survival of S.typhi. Is required to enhance bacterial resistance to bile in the human intestinal cells. The sequence is that of Virulence transcriptional regulatory protein PhoP (phoP) from Salmonella typhi.